The sequence spans 499 residues: UDP-N-acetylmuramoyl-L-alanyl-D-glutamate--2,6-diaminopimelate ligase (499 aa).

Residues Leu-30 and Ser-32 each coordinate UDP-N-acetyl-alpha-D-muramoyl-L-alanyl-D-glutamate. Residue 122 to 128 (GTNGKTT) participates in ATP binding. Residues 164-165 (TT), Ser-191, Gln-197, and Arg-199 each bind UDP-N-acetyl-alpha-D-muramoyl-L-alanyl-D-glutamate. Lys-231 is subject to N6-carboxylysine. Meso-2,6-diaminopimelate is bound by residues Arg-397, 421–424 (DNPR), Gly-472, and Glu-476. Positions 421-424 (DNPR) match the Meso-diaminopimelate recognition motif motif.

This sequence belongs to the MurCDEF family. MurE subfamily. It depends on Mg(2+) as a cofactor. Post-translationally, carboxylation is probably crucial for Mg(2+) binding and, consequently, for the gamma-phosphate positioning of ATP.

The protein localises to the cytoplasm. The enzyme catalyses UDP-N-acetyl-alpha-D-muramoyl-L-alanyl-D-glutamate + meso-2,6-diaminopimelate + ATP = UDP-N-acetyl-alpha-D-muramoyl-L-alanyl-gamma-D-glutamyl-meso-2,6-diaminopimelate + ADP + phosphate + H(+). Its pathway is cell wall biogenesis; peptidoglycan biosynthesis. In terms of biological role, catalyzes the addition of meso-diaminopimelic acid to the nucleotide precursor UDP-N-acetylmuramoyl-L-alanyl-D-glutamate (UMAG) in the biosynthesis of bacterial cell-wall peptidoglycan. The protein is UDP-N-acetylmuramoyl-L-alanyl-D-glutamate--2,6-diaminopimelate ligase of Blochmanniella floridana.